An 884-amino-acid polypeptide reads, in one-letter code: Alanine--tRNA ligase (884 aa).

The Zn(2+) site is built by H568, H572, C670, and H674.

Belongs to the class-II aminoacyl-tRNA synthetase family. Zn(2+) serves as cofactor.

Its subcellular location is the cytoplasm. The enzyme catalyses tRNA(Ala) + L-alanine + ATP = L-alanyl-tRNA(Ala) + AMP + diphosphate. Catalyzes the attachment of alanine to tRNA(Ala) in a two-step reaction: alanine is first activated by ATP to form Ala-AMP and then transferred to the acceptor end of tRNA(Ala). Also edits incorrectly charged Ser-tRNA(Ala) and Gly-tRNA(Ala) via its editing domain. In Synechococcus sp. (strain JA-2-3B'a(2-13)) (Cyanobacteria bacterium Yellowstone B-Prime), this protein is Alanine--tRNA ligase.